A 101-amino-acid polypeptide reads, in one-letter code: Large ribosomal subunit protein uL24 (101 aa).

Belongs to the universal ribosomal protein uL24 family. Part of the 50S ribosomal subunit.

Functionally, one of two assembly initiator proteins, it binds directly to the 5'-end of the 23S rRNA, where it nucleates assembly of the 50S subunit. One of the proteins that surrounds the polypeptide exit tunnel on the outside of the subunit. In Streptococcus suis (strain 98HAH33), this protein is Large ribosomal subunit protein uL24.